Reading from the N-terminus, the 143-residue chain is Large-conductance mechanosensitive channel (143 aa).

Transmembrane regions (helical) follow at residues 21 to 41, 44 to 64, and 86 to 106; these read VGVI…ADII, VVGL…LGTV, and GNFI…FMMV.

Belongs to the MscL family. In terms of assembly, homopentamer.

Its subcellular location is the cell inner membrane. In terms of biological role, channel that opens in response to stretch forces in the membrane lipid bilayer. May participate in the regulation of osmotic pressure changes within the cell. The protein is Large-conductance mechanosensitive channel of Variovorax paradoxus (strain S110).